A 481-amino-acid polypeptide reads, in one-letter code: Tagaturonate/fructuronate epimerase (481 aa).

Residue Asp-161 is the Proton acceptor of the active site. His-162 provides a ligand contact to a divalent metal cation. The Proton donor role is filled by Glu-266. Positions 308 and 341 each coordinate a divalent metal cation.

It belongs to the UxaE family. The cofactor is a divalent metal cation.

The catalysed reaction is keto-D-tagaturonate = keto-D-fructuronate. Catalyzes the epimerization of D-tagaturonate (D-TagA) to D-fructuronate (D-FruA). The polypeptide is Tagaturonate/fructuronate epimerase (Thermotoga maritima (strain ATCC 43589 / DSM 3109 / JCM 10099 / NBRC 100826 / MSB8)).